The chain runs to 568 residues: CTP synthase (568 aa).

Positions 1-276 (MPQARTIKHV…DAYLVRRLGL (276 aa)) are amidoligase domain. Residue Ser-18 coordinates CTP. Position 18 (Ser-18) interacts with UTP. Residues 19–24 (SLGKGL) and Asp-76 each bind ATP. The Mg(2+) site is built by Asp-76 and Glu-150. Residues 157 to 159 (DIE), 197 to 202 (KTKPTQ), and Lys-233 each bind CTP. Residues 197-202 (KTKPTQ) and Lys-233 contribute to the UTP site. Residues 301–550 (RIALVGKYVD…VNAALEYRAA (250 aa)) enclose the Glutamine amidotransferase type-1 domain. Gly-364 lines the L-glutamine pocket. Cys-391 serves as the catalytic Nucleophile; for glutamine hydrolysis. Residues 392–395 (LGLQ), Glu-415, and Arg-476 each bind L-glutamine. Active-site residues include His-523 and Glu-525.

The protein belongs to the CTP synthase family. In terms of assembly, homotetramer.

It catalyses the reaction UTP + L-glutamine + ATP + H2O = CTP + L-glutamate + ADP + phosphate + 2 H(+). The enzyme catalyses L-glutamine + H2O = L-glutamate + NH4(+). It carries out the reaction UTP + NH4(+) + ATP = CTP + ADP + phosphate + 2 H(+). The protein operates within pyrimidine metabolism; CTP biosynthesis via de novo pathway; CTP from UDP: step 2/2. Its activity is regulated as follows. Allosterically activated by GTP, when glutamine is the substrate; GTP has no effect on the reaction when ammonia is the substrate. The allosteric effector GTP functions by stabilizing the protein conformation that binds the tetrahedral intermediate(s) formed during glutamine hydrolysis. Inhibited by the product CTP, via allosteric rather than competitive inhibition. In terms of biological role, catalyzes the ATP-dependent amination of UTP to CTP with either L-glutamine or ammonia as the source of nitrogen. Regulates intracellular CTP levels through interactions with the four ribonucleotide triphosphates. The protein is CTP synthase of Saccharopolyspora erythraea (strain ATCC 11635 / DSM 40517 / JCM 4748 / NBRC 13426 / NCIMB 8594 / NRRL 2338).